The primary structure comprises 131 residues: Arsenate reductase 1 (131 aa).

Active-site nucleophile residues include cysteine 10, cysteine 82, and cysteine 89. 2 cysteine pairs are disulfide-bonded: cysteine 10–cysteine 82 and cysteine 82–cysteine 89.

It belongs to the low molecular weight phosphotyrosine protein phosphatase family. Thioredoxin-coupled ArsC subfamily.

The protein resides in the cytoplasm. The enzyme catalyses arsenate + [thioredoxin]-dithiol + H(+) = arsenite + [thioredoxin]-disulfide + H2O. Its function is as follows. Catalyzes the reduction of arsenate [As(V)] to arsenite [As(III)]. This Staphylococcus saprophyticus subsp. saprophyticus (strain ATCC 15305 / DSM 20229 / NCIMB 8711 / NCTC 7292 / S-41) protein is Arsenate reductase 1.